The sequence spans 199 residues: MSCMPISTKCNDIWVDFSCTGPSLSELQKKEPKAWAAILRSQRSQQTAEDDTIIGSICDKQGLCSKNEYAYSQYCACVNSGTLWAECAFAPCNGNKNAYKTTEHRNILTNKQCPSGLTICQNIAEYGGTGNISDLYQNFNCNSVINTFLINVMNHPFLTLILIILILVIIYRLMSSSGGKHNEDKLPPPSLIFSNLNNF.

N131 carries an N-linked (GlcNAc...) asparagine; by host glycan. Residues I150 to I170 form a helical membrane-spanning segment.

Belongs to the asfivirus E199L family. Interacts with host PYCR2; this interaction results in autophagy activation. Contains intramolecular disulfide bonds.

The protein resides in the virion membrane. Its subcellular location is the host membrane. In terms of biological role, essential for viral fusion with host endosomal membrane and core release. Not required for virus morphogenesis and egress. Induces complete autophagy through the interaction with and down-regulation of host PYCR2. This is Inner membrane protein E199L from African swine fever virus (isolate Tick/Malawi/Lil 20-1/1983) (ASFV).